A 96-amino-acid chain; its full sequence is Co-chaperonin GroES (96 aa).

This sequence belongs to the GroES chaperonin family. In terms of assembly, heptamer of 7 subunits arranged in a ring. Interacts with the chaperonin GroEL.

Its subcellular location is the cytoplasm. Together with the chaperonin GroEL, plays an essential role in assisting protein folding. The GroEL-GroES system forms a nano-cage that allows encapsulation of the non-native substrate proteins and provides a physical environment optimized to promote and accelerate protein folding. GroES binds to the apical surface of the GroEL ring, thereby capping the opening of the GroEL channel. In Neisseria meningitidis serogroup B (strain ATCC BAA-335 / MC58), this protein is Co-chaperonin GroES.